The primary structure comprises 413 residues: RNA-binding protein 41 (413 aa).

Residues 225 to 247 are disordered; that stretch reads SGSGTAEKPSLLQDKGKQAAQGK. The region spanning 309–387 is the RRM domain; it reads KVLYLKNLSP…KILVIEFAKS (79 aa).

Its function is as follows. May bind RNA. In Mus musculus (Mouse), this protein is RNA-binding protein 41 (Rbm41).